We begin with the raw amino-acid sequence, 507 residues long: ATP synthase subunit alpha, chloroplastic (507 aa).

An ATP-binding site is contributed by 170 to 177 (GDRQTGKT).

The protein belongs to the ATPase alpha/beta chains family. In terms of assembly, F-type ATPases have 2 components, CF(1) - the catalytic core - and CF(0) - the membrane proton channel. CF(1) has five subunits: alpha(3), beta(3), gamma(1), delta(1), epsilon(1). CF(0) has four main subunits: a, b, b' and c.

It localises to the plastid. Its subcellular location is the chloroplast thylakoid membrane. It carries out the reaction ATP + H2O + 4 H(+)(in) = ADP + phosphate + 5 H(+)(out). Functionally, produces ATP from ADP in the presence of a proton gradient across the membrane. The alpha chain is a regulatory subunit. The protein is ATP synthase subunit alpha, chloroplastic of Dioscorea elephantipes (Elephant's foot yam).